The following is a 651-amino-acid chain: Tudor domain-containing protein 3 (651 aa).

Positions 147–189 are disordered; the sequence is TKTFGGGGGGVRSHLNIGAGGHRNREVSQKEKASKSESKNEGV. Positions 169–189 are enriched in basic and acidic residues; the sequence is RNREVSQKEKASKSESKNEGV. A UBA domain is found at 193 to 233; sequence LVDEKALKHITEMGFSKEASRQALMDNANNLEAALNVLLNS. Disordered regions lie at residues 234–272, 306–371, and 384–459; these read SKQKPVVGPPPRGRGKGRGRVRSEDEEDLGNARPSAPST, TEQN…DVWA, and YDRT…RKSR. Position 256 is a phosphoserine (Ser-256). A compositionally biased stretch (basic and acidic residues) spans 321–338; the sequence is PRNDPRQPRNEKPPRFQR. Residues 339-352 are compositionally biased toward polar residues; sequence DTPNLKSALENSVL. Ser-345 is subject to Phosphoserine. A Glycyl lysine isopeptide (Lys-Gly) (interchain with G-Cter in SUMO2) cross-link involves residue Lys-470. The 61-residue stretch at 555 to 615 folds into the Tudor domain; sequence MWKPGDECFA…KPVQTEAWEE (61 aa). Basic and acidic residues predominate over residues 624-633; sequence EFRRGGDGQP. The disordered stretch occupies residues 624-651; the sequence is EFRRGGDGQPRRSTRPTQQFYQPPRARN. The segment at 631 to 651 is EBM motif; may mediate interaction with the EJC; sequence GQPRRSTRPTQQFYQPPRARN.

In terms of assembly, component of mRNA stress granules. Interacts with FMR1, FXR1, FXR2, EWSR1, FUS, SERBP1, EEF1A1 and DDX3X or DDX3Y, and with the small nuclear ribonucleoprotein-associated proteins SNRPB and SNRPN. Interacts with 'Lys-48'-linked tetra-ubiquitin, but not with monoubiquitin or 'Lys-63'-linked ubiquitin chains. May interact with the exon junction complex (EJC) composed at least of CASC3, EIF4A3, MAGOH and RBM8A. Interacts with POLR2A (via the C-terminal domain (CTD)).

The protein localises to the cytoplasm. It is found in the nucleus. Scaffolding protein that specifically recognizes and binds dimethylarginine-containing proteins. Plays a role in the regulation of translation of target mRNAs by binding Arg/Gly-rich motifs (GAR) in dimethylarginine-containing proteins. In nucleus, acts as a coactivator: recognizes and binds asymmetric dimethylation on the core histone tails associated with transcriptional activation (H3R17me2a and H4R3me2a) and recruits proteins at these arginine-methylated loci. In cytoplasm, acts as an antiviral factor that participates in the assembly of stress granules together with G3BP1. This is Tudor domain-containing protein 3 (Tdrd3) from Rattus norvegicus (Rat).